The following is a 224-amino-acid chain: MADYWKSIPKYYCKYCQIFVKDTPFARRSHEQTYKHQDAIKKVMDDIHRSNLLRQELEKNLSIPKSATATTASAVSSELASYEKPKKEHPKLRPSKKKATLDDWDIPTSSTETDTISTTHTSYIPTLLAKQEENEETKETTTNKNESLPGTSLKRNREIIEKEERSSFHFRVKPKNLDKVPKLAENEGNKSLESKESNENKVVFKKKKSGKLRTKSSLKEYDQS.

Residues 11–42 form a Matrin-type zinc finger; the sequence is YYCKYCQIFVKDTPFARRSHEQTYKHQDAIKK. Over residues 67–80 the composition is skewed to low complexity; sequence ATATTASAVSSELA. Disordered regions lie at residues 67–158 and 172–224; these read ATAT…RNRE and VKPK…YDQS. A compositionally biased stretch (basic residues) spans 87–98; the sequence is KEHPKLRPSKKK. The span at 108-122 shows a compositional bias: low complexity; it reads TSSTETDTISTTHTS. A compositionally biased stretch (basic and acidic residues) spans 175-199; it reads KNLDKVPKLAENEGNKSLESKESNE. Positions 203–216 are enriched in basic residues; that stretch reads VFKKKKSGKLRTKS.

Its subcellular location is the nucleus. The protein localises to the nucleolus. This is an uncharacterized protein from Schizosaccharomyces pombe (strain 972 / ATCC 24843) (Fission yeast).